A 513-amino-acid chain; its full sequence is Probable cytosol aminopeptidase (513 aa).

Positions 275 and 280 each coordinate Mn(2+). The active site involves Lys287. Asp298, Asp357, and Glu359 together coordinate Mn(2+). Residue Arg361 is part of the active site.

It belongs to the peptidase M17 family. Requires Mn(2+) as cofactor.

The protein localises to the cytoplasm. It catalyses the reaction Release of an N-terminal amino acid, Xaa-|-Yaa-, in which Xaa is preferably Leu, but may be other amino acids including Pro although not Arg or Lys, and Yaa may be Pro. Amino acid amides and methyl esters are also readily hydrolyzed, but rates on arylamides are exceedingly low.. The catalysed reaction is Release of an N-terminal amino acid, preferentially leucine, but not glutamic or aspartic acids.. Presumably involved in the processing and regular turnover of intracellular proteins. Catalyzes the removal of unsubstituted N-terminal amino acids from various peptides. The protein is Probable cytosol aminopeptidase of Streptomyces avermitilis (strain ATCC 31267 / DSM 46492 / JCM 5070 / NBRC 14893 / NCIMB 12804 / NRRL 8165 / MA-4680).